We begin with the raw amino-acid sequence, 420 residues long: uncharacterized protein (420 aa).

It belongs to the mimivirus R160 family.

Its subcellular location is the virion. This is an uncharacterized protein from Acanthamoeba polyphaga mimivirus (APMV).